Consider the following 123-residue polypeptide: Maintenance of telomere capping protein 3, mitochondrial (123 aa).

The N-terminal 37 residues, 1-37 (MMGRNGIRLALKRSFSTYQPPVVEITNITKLWPTLRP), are a transit peptide targeting the mitochondrion.

It is found in the mitochondrion. May be involved in telomere capping. This chain is Maintenance of telomere capping protein 3, mitochondrial (MTC3), found in Saccharomyces cerevisiae (strain ATCC 204508 / S288c) (Baker's yeast).